Reading from the N-terminus, the 208-residue chain is Outer-membrane lipoprotein carrier protein (208 aa).

An N-terminal signal peptide occupies residues 1 to 21; sequence MKRTATLLVVALILALNTAQA.

The protein belongs to the LolA family. In terms of assembly, monomer.

Its subcellular location is the periplasm. Functionally, participates in the translocation of lipoproteins from the inner membrane to the outer membrane. Only forms a complex with a lipoprotein if the residue after the N-terminal Cys is not an aspartate (The Asp acts as a targeting signal to indicate that the lipoprotein should stay in the inner membrane). The polypeptide is Outer-membrane lipoprotein carrier protein (Halorhodospira halophila (strain DSM 244 / SL1) (Ectothiorhodospira halophila (strain DSM 244 / SL1))).